We begin with the raw amino-acid sequence, 198 residues long: NAD(P)H dehydrogenase (quinone) (198 aa).

A Flavodoxin-like domain is found at 4 to 189 (ILVLYYSMYG…SIARYQGEYV (186 aa)). Residues 10–15 (SMYGHI) and 78–80 (TRF) contribute to the FMN site. Residue Tyr-12 participates in NAD(+) binding. Trp-98 contacts substrate. Residues 113-118 (STGTGG) and His-133 contribute to the FMN site.

It belongs to the WrbA family. FMN serves as cofactor.

The enzyme catalyses a quinone + NADH + H(+) = a quinol + NAD(+). It catalyses the reaction a quinone + NADPH + H(+) = a quinol + NADP(+). The sequence is that of NAD(P)H dehydrogenase (quinone) from Salmonella paratyphi C (strain RKS4594).